Here is a 158-residue protein sequence, read N- to C-terminus: Dysbindin domain-containing protein 1 (158 aa).

2 disordered regions span residues M1–P50 and A93–D158. A phosphoserine mark is found at S95 and S119. Positions T125–R141 are enriched in basic and acidic residues.

It belongs to the dysbindin family.

In Homo sapiens (Human), this protein is Dysbindin domain-containing protein 1 (DBNDD1).